Reading from the N-terminus, the 520-residue chain is 2-methylcitrate dehydratase, mitochondrial (520 aa).

The N-terminal 37 residues, 1–37 (MRAFRSAANFGAASNIYRKSFTPASIASNRFVSARMS), are a transit peptide targeting the mitochondrion.

Belongs to the PrpD family. Monomer.

Its subcellular location is the mitochondrion. It carries out the reaction (2S,3S)-2-methylcitrate = 2-methyl-cis-aconitate + H2O. It functions in the pathway organic acid metabolism; propanoate degradation. Its activity is regulated as follows. Several bivalent metal ions, such as nickel, copper, zinc, mercury, and lead, inhibit the activity to some extent. Inhibited by structural analogs such as citrate, cis-aconitate, isocitrate, 2-methylisocitrate, tricarballylate and fluorocitrate, but not by trans-aconitate or adipate. In terms of biological role, component of the methylcitrate cycle that catalyzes the dehydration of 2-methylcitrate to 2-methyl-cis-aconitate. The methylcitrate cycle is a metabolic pathway for the consumption of propionic acid. The protein is 2-methylcitrate dehydratase, mitochondrial of Yarrowia lipolytica (strain CLIB 122 / E 150) (Yeast).